Reading from the N-terminus, the 233-residue chain is MGLPFQIEYGQTTGRPELIEDALRQFSAALALTADAGGLYVHGYDESRNQRWANPASGKSPAIWARAVGWLAMALVDALVILPDDSATAELRERTRRLLAGIIARQTQAGLWMQVLDNQGLAGNYAETSASAMFAYALLRAARLGLLRGEEAKAALSAGRQALAALLETRLELDEQGVARLTGIVHVAGLGGFDGNYRDGTPDYYLTEPVVSDDAKGVGPLMMAYAESLLLAR.

It belongs to the glycosyl hydrolase 88 family.

Its function is as follows. Seems to regulate the surface properties of the bacterium in the presence of plant cells or plant cell extracts. Mutations in this protein are responsible for an increased aggregation of the bacteria in the presence of pea root cap cells. The chain is Protein Atu3128 from Agrobacterium fabrum (strain C58 / ATCC 33970) (Agrobacterium tumefaciens (strain C58)).